The following is a 590-amino-acid chain: G protein-coupled receptor kinase 5 (590 aa).

Residues 1–185 form an N-terminal region; it reads MELENIVANT…LERQPVTKNT (185 aa). Residues 20 to 39 form an interaction with calmodulin region; the sequence is GGKRKGKSKKWKEILKFPHI. In terms of domain architecture, RGS spans 53 to 171; it reads YYSLCDKQPI…LDSMYFDRFL (119 aa). Position 136 is a phosphoserine (Ser136). In terms of domain architecture, Protein kinase spans 186–448; that stretch reads FRQYRVLGKG…AAEVKRHPFF (263 aa). ATP-binding positions include 192 to 200 and Lys215; that span reads LGKGGFGEV. Catalysis depends on Asp311, which acts as the Proton acceptor. Residues 388-395 carry the Nuclear localization signal motif; that stretch reads RKEKVKRE. The AGC-kinase C-terminal domain maps to 449-514; it reads RNMNFKRLEA…GSVPIPWQNE (66 aa). Phosphoserine; by autocatalysis is present on Ser484. Position 485 is a phosphothreonine; by autocatalysis (Thr485). Residues 546 to 565 form a sufficient for membrane localization region; that stretch reads PKKGLFHRLFRRQHQSNSKS. Positions 557–590 are disordered; sequence RQHQSNSKSSPTPKTSCNHRINSNHINSNSTGSS. The span at 561 to 590 shows a compositional bias: low complexity; the sequence is SNSKSSPTPKTSCNHRINSNHINSNSTGSS. Ser579 carries the post-translational modification Phosphoserine.

This sequence belongs to the protein kinase superfamily. AGC Ser/Thr protein kinase family. GPRK subfamily. As to quaternary structure, interacts with ST13 (via the C-terminus 303-319 AA). Interacts with TP53/p53. Interacts with HTR4 (via C-terminus 330-346 AA); this interaction is promoted by 5-HT (serotonin). Interacts with HDAC5. Interacts with GIT1. In terms of processing, autophosphorylated. Autophosphorylation may play a critical role in the regulation of GRK5 kinase activity.

The protein resides in the cytoplasm. It localises to the nucleus. The protein localises to the cell membrane. The catalysed reaction is [G-protein-coupled receptor] + ATP = [G-protein-coupled receptor]-phosphate + ADP + H(+). Inhibited by calmodulin with an IC(50) of 50 nM. Calmodulin inhibits GRK5 association with receptor and phospholipid. Its function is as follows. Serine/threonine kinase that phosphorylates preferentially the activated forms of a variety of G-protein-coupled receptors (GPCRs). Such receptor phosphorylation initiates beta-arrestin-mediated receptor desensitization, internalization, and signaling events leading to their down-regulation. Phosphorylates a variety of GPCRs, including adrenergic receptors, muscarinic acetylcholine receptors (more specifically Gi-coupled M2/M4 subtypes), dopamine receptors and opioid receptors. In addition to GPCRs, also phosphorylates various substrates: Hsc70-interacting protein/ST13, TP53/p53, HDAC5, and arrestin-1/ARRB1. Phosphorylation of ARRB1 by GRK5 inhibits G-protein independent MAPK1/MAPK3 signaling downstream of 5HT4-receptors. Phosphorylation of HDAC5, a repressor of myocyte enhancer factor 2 (MEF2) leading to nuclear export of HDAC5 and allowing MEF2-mediated transcription. Phosphorylation of TP53/p53, a crucial tumor suppressor, inhibits TP53/p53-mediated apoptosis. Phosphorylation of ST13 regulates internalization of the chemokine receptor. Phosphorylates rhodopsin (RHO) (in vitro) and a non G-protein-coupled receptor, LRP6 during Wnt signaling (in vitro). The polypeptide is G protein-coupled receptor kinase 5 (Grk5) (Mus musculus (Mouse)).